We begin with the raw amino-acid sequence, 563 residues long: Arginine--tRNA ligase (563 aa).

Positions 120–130 match the 'HIGH' region motif; sequence PNIAKPFHVGH.

Belongs to the class-I aminoacyl-tRNA synthetase family. Monomer.

The protein localises to the cytoplasm. It carries out the reaction tRNA(Arg) + L-arginine + ATP = L-arginyl-tRNA(Arg) + AMP + diphosphate. The protein is Arginine--tRNA ligase of Clostridium beijerinckii (strain ATCC 51743 / NCIMB 8052) (Clostridium acetobutylicum).